Reading from the N-terminus, the 386-residue chain is Diaminopimelate decarboxylase (386 aa).

Residue Lys-49 is modified to N6-(pyridoxal phosphate)lysine. Residues Gly-228 and 266-269 (ELGR) contribute to the pyridoxal 5'-phosphate site. Residues Arg-269, Arg-305, Tyr-309, Glu-335, and Tyr-363 each coordinate substrate. Tyr-363 is a binding site for pyridoxal 5'-phosphate.

Belongs to the Orn/Lys/Arg decarboxylase class-II family. LysA subfamily. As to quaternary structure, homodimer. Pyridoxal 5'-phosphate serves as cofactor.

The enzyme catalyses meso-2,6-diaminopimelate + H(+) = L-lysine + CO2. It participates in amino-acid biosynthesis; L-lysine biosynthesis via DAP pathway; L-lysine from DL-2,6-diaminopimelate: step 1/1. Specifically catalyzes the decarboxylation of meso-diaminopimelate (meso-DAP) to L-lysine. The polypeptide is Diaminopimelate decarboxylase (Bacteroides thetaiotaomicron (strain ATCC 29148 / DSM 2079 / JCM 5827 / CCUG 10774 / NCTC 10582 / VPI-5482 / E50)).